We begin with the raw amino-acid sequence, 315 residues long: MQESLNSNDFKEYAAKKAKHITSAKNIAPLLECIASLPTIPSHFYSDNGIHIVAQDKTLAQKYHKAIYTLATQLKPWRKGPFFLFDIHIDSEWQSFMKWQLLAPHCNLEGKYIADVGCNNGYYMFEMLLQGKKLYKKIIGFDPSGIFKCQFDFINHFINAPIEFELLGVEDLLAYSQAHNQSFDVIFCLGVLYHRFDPINTLKILSQSLNKGGELILDTLIYESNEEICLCPAQSYAKMSNVYFIPSIPTLKGWCERANLYDFEVINLTPTTTQEQRQSAWVDSQSLSAFLNETQTRTIEGYQAPLRGYFKLKKR.

Carboxy-S-adenosyl-L-methionine is bound by residues Lys79, Trp93, Lys98, Gly117, 142 to 144 (DPS), 169 to 170 (VE), Tyr193, and Arg307.

Belongs to the class I-like SAM-binding methyltransferase superfamily. CmoB family. As to quaternary structure, homotetramer.

It carries out the reaction carboxy-S-adenosyl-L-methionine + 5-hydroxyuridine(34) in tRNA = 5-carboxymethoxyuridine(34) in tRNA + S-adenosyl-L-homocysteine + H(+). Catalyzes carboxymethyl transfer from carboxy-S-adenosyl-L-methionine (Cx-SAM) to 5-hydroxyuridine (ho5U) to form 5-carboxymethoxyuridine (cmo5U) at position 34 in tRNAs. This chain is tRNA U34 carboxymethyltransferase, found in Helicobacter hepaticus (strain ATCC 51449 / 3B1).